A 276-amino-acid chain; its full sequence is Putative pyruvate, phosphate dikinase regulatory protein 1 (276 aa).

Position 157–164 (157–164 (GVSRTSKT)) interacts with ADP.

It belongs to the pyruvate, phosphate/water dikinase regulatory protein family. PDRP subfamily.

The catalysed reaction is N(tele)-phospho-L-histidyl/L-threonyl-[pyruvate, phosphate dikinase] + ADP = N(tele)-phospho-L-histidyl/O-phospho-L-threonyl-[pyruvate, phosphate dikinase] + AMP + H(+). The enzyme catalyses N(tele)-phospho-L-histidyl/O-phospho-L-threonyl-[pyruvate, phosphate dikinase] + phosphate + H(+) = N(tele)-phospho-L-histidyl/L-threonyl-[pyruvate, phosphate dikinase] + diphosphate. In terms of biological role, bifunctional serine/threonine kinase and phosphorylase involved in the regulation of the pyruvate, phosphate dikinase (PPDK) by catalyzing its phosphorylation/dephosphorylation. In Staphylococcus haemolyticus (strain JCSC1435), this protein is Putative pyruvate, phosphate dikinase regulatory protein 1.